We begin with the raw amino-acid sequence, 418 residues long: Putative heat shock protein HSP 90-alpha A4 (418 aa).

ATP is bound by residues D33, K52, F78, and R204. Disordered regions lie at residues 255 to 289 (EDLE…TSAK) and 383 to 418 (GLGT…RMEK). The span at 265–274 (EKKKQEEGKQ) shows a compositional bias: basic and acidic residues.

Belongs to the heat shock protein 90 family. In terms of assembly, homodimer.

The protein resides in the cytoplasm. Putative molecular chaperone that may promote the maturation, structural maintenance and proper regulation of specific target proteins. This is Putative heat shock protein HSP 90-alpha A4 (HSP90AA4P) from Homo sapiens (Human).